The primary structure comprises 358 residues: Putative ankyrin repeat protein FPV242 (358 aa).

ANK repeat units lie at residues 6-35 (NNYR…NMIV), 40-69 (NNHT…NLVY), 91-118 (TRRN…DKGV), 119-147 (ELTG…SVEY), 149-177 (GFFP…DINK), 180-209 (CGET…DIEK), 214-243 (EQDP…SIDT), 248-277 (NHKP…NPFI), 280-312 (EGNT…RLPG), and 316-345 (YYIQ…RITS).

The chain is Putative ankyrin repeat protein FPV242 from Fowlpox virus (strain NVSL) (FPV).